The chain runs to 81 residues: ATP synthase subunit c (81 aa).

A run of 2 helical transmembrane segments spans residues 5–25 and 57–77; these read IAAGALIGGGLIMAGGAIGAG and VGLVEAAYFINLAFMALFVFA.

The protein belongs to the ATPase C chain family. In terms of assembly, F-type ATPases have 2 components, F(1) - the catalytic core - and F(0) - the membrane proton channel. F(1) has five subunits: alpha(3), beta(3), gamma(1), delta(1), epsilon(1). F(0) has three main subunits: a(1), b(2) and c(10-14). The alpha and beta chains form an alternating ring which encloses part of the gamma chain. F(1) is attached to F(0) by a central stalk formed by the gamma and epsilon chains, while a peripheral stalk is formed by the delta and b chains.

It is found in the cell membrane. In terms of biological role, f(1)F(0) ATP synthase produces ATP from ADP in the presence of a proton or sodium gradient. F-type ATPases consist of two structural domains, F(1) containing the extramembraneous catalytic core and F(0) containing the membrane proton channel, linked together by a central stalk and a peripheral stalk. During catalysis, ATP synthesis in the catalytic domain of F(1) is coupled via a rotary mechanism of the central stalk subunits to proton translocation. Its function is as follows. Key component of the F(0) channel; it plays a direct role in translocation across the membrane. A homomeric c-ring of between 10-14 subunits forms the central stalk rotor element with the F(1) delta and epsilon subunits. This is ATP synthase subunit c from Mycobacterium marinum (strain ATCC BAA-535 / M).